The following is a 222-amino-acid chain: Protein GrpE (222 aa).

2 disordered regions span residues 1–21 (MNDG…ENGQ) and 200–222 (KGGP…PEGA).

The protein belongs to the GrpE family. In terms of assembly, homodimer.

Its subcellular location is the cytoplasm. Functionally, participates actively in the response to hyperosmotic and heat shock by preventing the aggregation of stress-denatured proteins, in association with DnaK and GrpE. It is the nucleotide exchange factor for DnaK and may function as a thermosensor. Unfolded proteins bind initially to DnaJ; upon interaction with the DnaJ-bound protein, DnaK hydrolyzes its bound ATP, resulting in the formation of a stable complex. GrpE releases ADP from DnaK; ATP binding to DnaK triggers the release of the substrate protein, thus completing the reaction cycle. Several rounds of ATP-dependent interactions between DnaJ, DnaK and GrpE are required for fully efficient folding. This is Protein GrpE from Chelativorans sp. (strain BNC1).